Consider the following 396-residue polypeptide: NADH-quinone oxidoreductase subunit D (396 aa).

Belongs to the complex I 49 kDa subunit family. In terms of assembly, NDH-1 is composed of 14 different subunits. Subunits NuoB, C, D, E, F, and G constitute the peripheral sector of the complex.

It localises to the cell inner membrane. The enzyme catalyses a quinone + NADH + 5 H(+)(in) = a quinol + NAD(+) + 4 H(+)(out). Functionally, NDH-1 shuttles electrons from NADH, via FMN and iron-sulfur (Fe-S) centers, to quinones in the respiratory chain. The immediate electron acceptor for the enzyme in this species is believed to be ubiquinone. Couples the redox reaction to proton translocation (for every two electrons transferred, four hydrogen ions are translocated across the cytoplasmic membrane), and thus conserves the redox energy in a proton gradient. The sequence is that of NADH-quinone oxidoreductase subunit D from Brucella canis (strain ATCC 23365 / NCTC 10854 / RM-666).